The primary structure comprises 484 residues: Probable cytochrome P450 508A1 (484 aa).

The helical transmembrane segment at 1 to 21 threads the bilayer; that stretch reads MALFEIIISLFVVYIIHNAIS. C428 provides a ligand contact to heme.

The protein belongs to the cytochrome P450 family. Heme is required as a cofactor.

Its subcellular location is the membrane. This Dictyostelium discoideum (Social amoeba) protein is Probable cytochrome P450 508A1 (cyp508A1-1).